Reading from the N-terminus, the 203-residue chain is Small ribosomal subunit protein uS4 (203 aa).

In terms of domain architecture, S4 RNA-binding spans 93 to 154 (RRLDNVVYRC…KSRNLDAVAD (62 aa)).

The protein belongs to the universal ribosomal protein uS4 family. Part of the 30S ribosomal subunit. Contacts protein S5. The interaction surface between S4 and S5 is involved in control of translational fidelity.

Functionally, one of the primary rRNA binding proteins, it binds directly to 16S rRNA where it nucleates assembly of the body of the 30S subunit. With S5 and S12 plays an important role in translational accuracy. This is Small ribosomal subunit protein uS4 from Chlorobaculum tepidum (strain ATCC 49652 / DSM 12025 / NBRC 103806 / TLS) (Chlorobium tepidum).